The following is a 272-amino-acid chain: Large ribosomal subunit protein uL3 (272 aa).

The disordered stretch occupies residues 125-146 (QHIGPKSHGGGGGSQPLRQTGS).

Belongs to the universal ribosomal protein uL3 family. As to quaternary structure, part of the 50S ribosomal subunit. Forms a cluster with proteins L14 and L19.

One of the primary rRNA binding proteins, it binds directly near the 3'-end of the 23S rRNA, where it nucleates assembly of the 50S subunit. The polypeptide is Large ribosomal subunit protein uL3 (Metamycoplasma arthritidis (strain 158L3-1) (Mycoplasma arthritidis)).